Here is a 712-residue protein sequence, read N- to C-terminus: Glycine--tRNA ligase beta subunit (712 aa).

Belongs to the class-II aminoacyl-tRNA synthetase family. In terms of assembly, tetramer of two alpha and two beta subunits.

The protein resides in the cytoplasm. The catalysed reaction is tRNA(Gly) + glycine + ATP = glycyl-tRNA(Gly) + AMP + diphosphate. The polypeptide is Glycine--tRNA ligase beta subunit (Dechloromonas aromatica (strain RCB)).